The following is a 286-amino-acid chain: Small ribosomal subunit protein uS2 (286 aa).

The disordered stretch occupies residues 231 to 286; the sequence is ERAQAEAKAAAGDNDAPVSSEGESTEVASDAASTASETTATSSDESAAESSEAESK. Residues 255 to 280 are compositionally biased toward low complexity; sequence TEVASDAASTASETTATSSDESAAES.

Belongs to the universal ribosomal protein uS2 family.

The sequence is that of Small ribosomal subunit protein uS2 from Corynebacterium kroppenstedtii (strain DSM 44385 / JCM 11950 / CIP 105744 / CCUG 35717).